Consider the following 230-residue polypeptide: MSRLSAAVVAIDGPAGTGKSSVSRRLARELGARFLDTGAMYRIVTLAVLRAGADPSDIAAVETIASTVQMSLGYDPDGDSCYLAGEDVSVEIRGDAVTRAVSAVSSVPAVRTRLVELQRTMAEGPGSIVVEGRDIGTVVFPDAPVKIFLTASAETRARRRNAQNVAAGLADDYDGVLADVRRRDHLDSTRAVSPLQAAGDAVIVDTSDMTEAEVVAHLLELVTRRSEAVR.

13–21 (GPAGTGKSS) contributes to the ATP binding site.

It belongs to the cytidylate kinase family. Type 1 subfamily.

The protein resides in the cytoplasm. The enzyme catalyses CMP + ATP = CDP + ADP. The catalysed reaction is dCMP + ATP = dCDP + ADP. In Mycobacterium tuberculosis (strain ATCC 25177 / H37Ra), this protein is Cytidylate kinase.